Here is a 718-residue protein sequence, read N- to C-terminus: Probable protein S-acyltransferase 19 (718 aa).

Helical transmembrane passes span 16 to 36 and 41 to 61; these read VVAITVFCLLSVAYYAFFAPF and IWEYILLGVYSPVALIVFVLY. The segment at 100 to 125 is disordered; sequence ETGSHLQSSPSVASRTSTLPNSSVKG. Positions 103 to 124 are enriched in polar residues; sequence SHLQSSPSVASRTSTLPNSSVK. The region spanning 174–224 is the DHHC domain; the sequence is LFCTLCNAEVRKFSKHCRSCDKCVDCFDHHCRWLNNCVGRKNYMTFISLMA. Residue Cys-204 is the S-palmitoyl cysteine intermediate of the active site. 2 helical membrane passes run 222–242 and 277–297; these read LMAVSLLWLLIEAGVGIAVIV and AVSMLALFPLGELFFFHMLLI. 3 disordered regions span residues 454-511, 598-649, and 664-718; these read SSVS…HVHE, PATT…QQQQ, and GPLV…GTRK. 2 stretches are compositionally biased toward polar residues: residues 479 to 488 and 598 to 626; these read CRNSYAPSQG and PATTSEPRTRFSSQNQPIPSSHMGNTQNP. The span at 673–687 shows a compositional bias: basic and acidic residues; sequence DGLRHDGDSGREGQD.

This sequence belongs to the DHHC palmitoyltransferase family.

Its subcellular location is the cell membrane. The catalysed reaction is L-cysteinyl-[protein] + hexadecanoyl-CoA = S-hexadecanoyl-L-cysteinyl-[protein] + CoA. In terms of biological role, palmitoyl acyltransferase. This chain is Probable protein S-acyltransferase 19 (PAT19), found in Arabidopsis thaliana (Mouse-ear cress).